A 519-amino-acid chain; its full sequence is Ent-kaurene oxidase (519 aa).

At 1–10 (MDTLLSLQAV) the chain is on the chloroplast intermembrane side. The chain crosses the membrane as a helical span at residues 11-31 (PAAAAIGGPVVAIGGITLFFI). Residues 32–519 (REYVKDQRKK…PRLRDRVCVS (488 aa)) are Cytoplasmic-facing. A heme-binding site is contributed by Cys-458.

This sequence belongs to the cytochrome P450 family. It depends on heme as a cofactor.

The protein resides in the plastid. It is found in the chloroplast outer membrane. The enzyme catalyses ent-kaur-16-ene + 3 reduced [NADPH--hemoprotein reductase] + 3 O2 = ent-kaur-16-en-19-oate + 3 oxidized [NADPH--hemoprotein reductase] + 4 H2O + 4 H(+). It participates in plant hormone biosynthesis; gibberellin biosynthesis. In terms of biological role, catalyzes three successive oxidations of the 4-methyl group of ent-kaurene giving kaurenoic acid, a key step in gibberellins (GAs) biosynthesis. GAs, which are involved many processes, including stem elongation, play a central role in plant development. This is Ent-kaurene oxidase from Salvia miltiorrhiza (Chinese sage).